A 480-amino-acid polypeptide reads, in one-letter code: 6-phosphogluconate dehydrogenase, decarboxylating (480 aa).

NADP(+) contacts are provided by residues 11 to 16 (GLAVMG), 34 to 36 (NRS), 76 to 78 (IKA), and Asn104. Substrate contacts are provided by residues Asn104 and 130-132 (SGG). The active-site Proton acceptor is Lys184. Residue 187–188 (HN) participates in substrate binding. The active-site Proton donor is the Glu191. 5 residues coordinate substrate: Tyr192, Lys261, Arg288, Arg448, and His454.

Belongs to the 6-phosphogluconate dehydrogenase family. In terms of assembly, homodimer.

The catalysed reaction is 6-phospho-D-gluconate + NADP(+) = D-ribulose 5-phosphate + CO2 + NADPH. It functions in the pathway carbohydrate degradation; pentose phosphate pathway; D-ribulose 5-phosphate from D-glucose 6-phosphate (oxidative stage): step 3/3. Its function is as follows. Catalyzes the oxidative decarboxylation of 6-phosphogluconate to ribulose 5-phosphate and CO(2), with concomitant reduction of NADP to NADPH. This chain is 6-phosphogluconate dehydrogenase, decarboxylating (gnd), found in Chlamydia trachomatis serovar D (strain ATCC VR-885 / DSM 19411 / UW-3/Cx).